Consider the following 86-residue polypeptide: Cell division protein ZapA (86 aa).

Belongs to the ZapA family. Type 2 subfamily. As to quaternary structure, homodimer. Interacts with FtsZ.

It is found in the cytoplasm. Activator of cell division through the inhibition of FtsZ GTPase activity, therefore promoting FtsZ assembly into bundles of protofilaments necessary for the formation of the division Z ring. It is recruited early at mid-cell but it is not essential for cell division. This Oceanobacillus iheyensis (strain DSM 14371 / CIP 107618 / JCM 11309 / KCTC 3954 / HTE831) protein is Cell division protein ZapA.